The following is a 291-amino-acid chain: Flavin-dependent thymidylate synthase (291 aa).

Positions 31 to 241 (GFVRVVDYMG…PMVHAAFVEY (211 aa)) constitute a ThyX domain. FAD-binding positions include serine 77, 100-102 (RHR), and glutamate 108. Residues 97-100 (QWVR), 108-112 (EYSAR), and arginine 180 contribute to the dUMP site. The ThyX motif motif lies at 100–110 (RHRTASINEYS). 196-198 (NLH) is a binding site for FAD. Arginine 207 is a dUMP binding site. Arginine 207 serves as the catalytic Involved in ionization of N3 of dUMP, leading to its activation.

It belongs to the thymidylate synthase ThyX family. Homotetramer. FAD serves as cofactor.

It carries out the reaction dUMP + (6R)-5,10-methylene-5,6,7,8-tetrahydrofolate + NADPH + H(+) = dTMP + (6S)-5,6,7,8-tetrahydrofolate + NADP(+). Its pathway is pyrimidine metabolism; dTTP biosynthesis. Its function is as follows. Catalyzes the reductive methylation of 2'-deoxyuridine-5'-monophosphate (dUMP) to 2'-deoxythymidine-5'-monophosphate (dTMP) while utilizing 5,10-methylenetetrahydrofolate (mTHF) as the methyl donor, and NADPH and FADH(2) as the reductant. This Anaplasma marginale (strain St. Maries) protein is Flavin-dependent thymidylate synthase.